The following is a 61-amino-acid chain: Large ribosomal subunit protein uL30 (61 aa).

This sequence belongs to the universal ribosomal protein uL30 family. In terms of assembly, part of the 50S ribosomal subunit.

In Rubrobacter xylanophilus (strain DSM 9941 / JCM 11954 / NBRC 16129 / PRD-1), this protein is Large ribosomal subunit protein uL30.